The following is a 124-amino-acid chain: Small ribosomal subunit protein eS6 (124 aa).

It belongs to the eukaryotic ribosomal protein eS6 family.

This is Small ribosomal subunit protein eS6 from Methanococcus maripaludis (strain DSM 14266 / JCM 13030 / NBRC 101832 / S2 / LL).